The following is a 101-amino-acid chain: Small ribosomal subunit protein uS14A (101 aa).

The disordered stretch occupies residues leucine 31–aspartate 67. Basic and acidic residues predominate over residues glutamate 38–arginine 53.

The protein belongs to the universal ribosomal protein uS14 family. In terms of assembly, part of the 30S ribosomal subunit. Contacts proteins S3 and S10.

Functionally, binds 16S rRNA, required for the assembly of 30S particles and may also be responsible for determining the conformation of the 16S rRNA at the A site. This chain is Small ribosomal subunit protein uS14A, found in Streptomyces coelicolor (strain ATCC BAA-471 / A3(2) / M145).